A 458-amino-acid polypeptide reads, in one-letter code: Bifunctional protein GlmU (458 aa).

The segment at 1 to 230 is pyrophosphorylase; sequence MLQVDVVILA…DWEVSGVNDK (230 aa). UDP-N-acetyl-alpha-D-glucosamine is bound by residues 9 to 12, Lys23, Gln75, and 80 to 81; these read LAAG and GT. Asp104 serves as a coordination point for Mg(2+). Positions 139, 155, 170, and 228 each coordinate UDP-N-acetyl-alpha-D-glucosamine. Residue Asn228 participates in Mg(2+) binding. Residues 231–251 are linker; the sequence is IQLSILERAHQQDTANRLMEQ. Residues 252 to 458 are N-acetyltransferase; sequence GVMFADPARF…NWKRPRKDRN (207 aa). Residues Arg334 and Lys352 each coordinate UDP-N-acetyl-alpha-D-glucosamine. His364 (proton acceptor) is an active-site residue. The UDP-N-acetyl-alpha-D-glucosamine site is built by Tyr367 and Asn378. Acetyl-CoA is bound by residues Ala381, 387–388, Ser406, Ala424, and Arg441; that span reads NY.

In the N-terminal section; belongs to the N-acetylglucosamine-1-phosphate uridyltransferase family. The protein in the C-terminal section; belongs to the transferase hexapeptide repeat family. In terms of assembly, homotrimer. Mg(2+) serves as cofactor.

The protein localises to the cytoplasm. The enzyme catalyses alpha-D-glucosamine 1-phosphate + acetyl-CoA = N-acetyl-alpha-D-glucosamine 1-phosphate + CoA + H(+). The catalysed reaction is N-acetyl-alpha-D-glucosamine 1-phosphate + UTP + H(+) = UDP-N-acetyl-alpha-D-glucosamine + diphosphate. It functions in the pathway nucleotide-sugar biosynthesis; UDP-N-acetyl-alpha-D-glucosamine biosynthesis; N-acetyl-alpha-D-glucosamine 1-phosphate from alpha-D-glucosamine 6-phosphate (route II): step 2/2. The protein operates within nucleotide-sugar biosynthesis; UDP-N-acetyl-alpha-D-glucosamine biosynthesis; UDP-N-acetyl-alpha-D-glucosamine from N-acetyl-alpha-D-glucosamine 1-phosphate: step 1/1. Its pathway is bacterial outer membrane biogenesis; LPS lipid A biosynthesis. In terms of biological role, catalyzes the last two sequential reactions in the de novo biosynthetic pathway for UDP-N-acetylglucosamine (UDP-GlcNAc). The C-terminal domain catalyzes the transfer of acetyl group from acetyl coenzyme A to glucosamine-1-phosphate (GlcN-1-P) to produce N-acetylglucosamine-1-phosphate (GlcNAc-1-P), which is converted into UDP-GlcNAc by the transfer of uridine 5-monophosphate (from uridine 5-triphosphate), a reaction catalyzed by the N-terminal domain. The polypeptide is Bifunctional protein GlmU (Nitrosomonas europaea (strain ATCC 19718 / CIP 103999 / KCTC 2705 / NBRC 14298)).